The primary structure comprises 230 residues: 2,3-bisphosphoglycerate-dependent phosphoglycerate mutase (230 aa).

Residues 8–15 (RHGQSIWN), 21–22 (TG), Arg60, 87–90 (ERHY), Lys98, and 114–115 (RR) each bind substrate. The active-site Tele-phosphohistidine intermediate is the His9. Glu87 acts as the Proton donor/acceptor in catalysis. The segment at 117 to 143 (YDTPPPALDAEDERHPRHDPRYAGLDP) is disordered. Basic and acidic residues predominate over residues 128-137 (DERHPRHDPR). Substrate is bound at residue 183-184 (GN).

Belongs to the phosphoglycerate mutase family. BPG-dependent PGAM subfamily. Homodimer.

It carries out the reaction (2R)-2-phosphoglycerate = (2R)-3-phosphoglycerate. Its pathway is carbohydrate degradation; glycolysis; pyruvate from D-glyceraldehyde 3-phosphate: step 3/5. Its function is as follows. Catalyzes the interconversion of 2-phosphoglycerate and 3-phosphoglycerate. This Halorhodospira halophila (strain DSM 244 / SL1) (Ectothiorhodospira halophila (strain DSM 244 / SL1)) protein is 2,3-bisphosphoglycerate-dependent phosphoglycerate mutase.